We begin with the raw amino-acid sequence, 251 residues long: Probable transcriptional regulatory protein Caul_0780 (251 aa).

This sequence belongs to the TACO1 family.

The protein resides in the cytoplasm. In Caulobacter sp. (strain K31), this protein is Probable transcriptional regulatory protein Caul_0780.